Consider the following 540-residue polypeptide: Acrosin-binding protein (540 aa).

Positions 1–24 are cleaved as a signal peptide; that stretch reads MKLAASFLLMLLEVLLLPETPLSA. The tract at residues 25–104 is pro-ACR binding; the sequence is EEALASTPGS…ASWFESFCQF (80 aa). Residues 25 to 272 constitute a propeptide, removed in mature form; sequence EEALASTPGS…NPSFFTPRVR (248 aa). A disordered region spans residues 181-266; that stretch reads SLSLGGKEQQ…SKSLSSNPSF (86 aa). The span at 195–213 shows a compositional bias: basic and acidic residues; it reads LGLEQQHKQEQIQEHKLEE. Over residues 214-241 the composition is skewed to acidic residues; it reads AQEQEEQEEEEEEEEAKQEEGQGTEEGL. Over residues 256–266 the composition is skewed to polar residues; that stretch reads QSKSLSSNPSF. Residues 316–424 are pro-ACR binding; that stretch reads LPHTETLMVL…NQAKIPEKGR (109 aa).

In terms of assembly, binds pro-ACR. Does not bind the mature form of ACR. Binds pro-ACR. Does not bind mature form of ACR. The N-terminus is blocked. Post-translationally, phosphorylated on Tyr residues in capacitated sperm. In terms of processing, synthesized as a 60-kDa precursor, the 32-kDa mature form is post-translationally produced by the removal of the N-terminal half of the precursor during sperm maturation in the testis and/or epididymis.

It is found in the cytoplasmic vesicle. It localises to the secretory vesicle. The protein localises to the acrosome. In terms of biological role, acrosomal protein that maintains proacrosin (pro-ACR) as an enzymatically inactive zymogen in the acrosome. Involved also in the acrosome formation. Maintains pro-ACR as an enzymatically inactive zymogen in the acrosome until acrosomal exocytosis. Partially also contributes to the assembly of acrosomal proteins to form an acrosomal granule. Its function is as follows. Rodent specific isoform that participates in the formation of the acrosomal granule into the center of the acrosomal vesicle during early spermiogenesis. In the fertilization process promotes ACR release from the acrosome during acrosomal exocytosis. The chain is Acrosin-binding protein from Rattus norvegicus (Rat).